Here is a 125-residue protein sequence, read N- to C-terminus: Small ribosomal subunit protein uS13 (125 aa).

The segment at 90–125 (TRHRRGLPVRGQRTHTNARTKKGPRRAIAGKKKVTK) is disordered.

This sequence belongs to the universal ribosomal protein uS13 family. As to quaternary structure, part of the 30S ribosomal subunit. Forms a loose heterodimer with protein S19. Forms two bridges to the 50S subunit in the 70S ribosome.

Functionally, located at the top of the head of the 30S subunit, it contacts several helices of the 16S rRNA. In the 70S ribosome it contacts the 23S rRNA (bridge B1a) and protein L5 of the 50S subunit (bridge B1b), connecting the 2 subunits; these bridges are implicated in subunit movement. Contacts the tRNAs in the A and P-sites. This Gemmatimonas aurantiaca (strain DSM 14586 / JCM 11422 / NBRC 100505 / T-27) protein is Small ribosomal subunit protein uS13.